The primary structure comprises 249 residues: DNA repair protein RecO (249 aa).

Belongs to the RecO family.

Its function is as follows. Involved in DNA repair and RecF pathway recombination. The sequence is that of DNA repair protein RecO from Sinorhizobium medicae (strain WSM419) (Ensifer medicae).